Reading from the N-terminus, the 54-residue chain is ATP synthase F(0) complex subunit 8 (54 aa).

The chain crosses the membrane as a helical span at residues 13–35 (ALSLWVCFPLMMLSLSSFLPLTL).

It belongs to the ATPase protein 8 family. In terms of assembly, component of the ATP synthase complex composed at least of ATP5F1A/subunit alpha, ATP5F1B/subunit beta, ATP5MC1/subunit c (homooctomer), MT-ATP6/subunit a, MT-ATP8/subunit 8, ATP5ME/subunit e, ATP5MF/subunit f, ATP5MG/subunit g, ATP5MK/subunit k, ATP5MJ/subunit j, ATP5F1C/subunit gamma, ATP5F1D/subunit delta, ATP5F1E/subunit epsilon, ATP5PF/subunit F6, ATP5PB/subunit b, ATP5PD/subunit d, ATP5PO/subunit OSCP. ATP synthase complex consists of a soluble F(1) head domain (subunits alpha(3) and beta(3)) - the catalytic core - and a membrane F(0) domain - the membrane proton channel (subunits c, a, 8, e, f, g, k and j). These two domains are linked by a central stalk (subunits gamma, delta, and epsilon) rotating inside the F1 region and a stationary peripheral stalk (subunits F6, b, d, and OSCP).

Its subcellular location is the mitochondrion membrane. Its function is as follows. Subunit 8, of the mitochondrial membrane ATP synthase complex (F(1)F(0) ATP synthase or Complex V) that produces ATP from ADP in the presence of a proton gradient across the membrane which is generated by electron transport complexes of the respiratory chain. ATP synthase complex consist of a soluble F(1) head domain - the catalytic core - and a membrane F(1) domain - the membrane proton channel. These two domains are linked by a central stalk rotating inside the F(1) region and a stationary peripheral stalk. During catalysis, ATP synthesis in the catalytic domain of F(1) is coupled via a rotary mechanism of the central stalk subunits to proton translocation. In vivo, can only synthesize ATP although its ATP hydrolase activity can be activated artificially in vitro. Part of the complex F(0) domain. The sequence is that of ATP synthase F(0) complex subunit 8 from Myxine glutinosa (Atlantic hagfish).